A 120-amino-acid chain; its full sequence is UPF0344 protein lin2366 (120 aa).

4 consecutive transmembrane segments (helical) span residues 3 to 23 (GYVH…ALLI), 33 to 53 (MLQM…IMMV), 62 to 82 (ILAI…EMLL), and 92 to 112 (GMFL…GFYL).

Belongs to the UPF0344 family.

It localises to the cell membrane. In Listeria innocua serovar 6a (strain ATCC BAA-680 / CLIP 11262), this protein is UPF0344 protein lin2366.